A 299-amino-acid polypeptide reads, in one-letter code: Probable lipid kinase YegS (299 aa).

The DAGKc domain occupies 2–133 (AEFPASLLIL…IDMAQVNKQT (132 aa)). ATP-binding positions include T40, 66 to 72 (GDGTINE), and T95. The Mg(2+) site is built by L215, D218, and L220. E271 functions as the Proton acceptor in the catalytic mechanism.

Belongs to the diacylglycerol/lipid kinase family. YegS lipid kinase subfamily. Requires Mg(2+) as cofactor. Ca(2+) serves as cofactor.

Its subcellular location is the cytoplasm. Probably phosphorylates lipids; the in vivo substrate is unknown. In Escherichia coli (strain K12 / MC4100 / BW2952), this protein is Probable lipid kinase YegS.